Reading from the N-terminus, the 303-residue chain is Monoglyceride lipase (303 aa).

Thr10 carries the phosphothreonine modification. At Tyr58 the chain carries 3'-nitrotyrosine. The Nucleophile role is filled by Ser122. Active-site charge relay system residues include Asp239 and His269.

This sequence belongs to the AB hydrolase superfamily. Monoacylglycerol lipase family. As to quaternary structure, homodimer. Detected in adipose tissue, lung, liver, kidney, brain and heart.

It localises to the cytoplasm. The protein resides in the cytosol. Its subcellular location is the membrane. It catalyses the reaction Hydrolyzes glycerol monoesters of long-chain fatty acids.. The enzyme catalyses a 1-acylglycerol + H2O = glycerol + a fatty acid + H(+). The catalysed reaction is a 2-acylglycerol + H2O = glycerol + a fatty acid + H(+). It carries out the reaction 1-octanoylglycerol + H2O = octanoate + glycerol + H(+). It catalyses the reaction 2-(5Z,8Z,11Z,14Z-eicosatetraenoyl)-glycerol + H2O = glycerol + (5Z,8Z,11Z,14Z)-eicosatetraenoate + H(+). The enzyme catalyses 1-decanoylglycerol + H2O = decanoate + glycerol + H(+). The catalysed reaction is 1-dodecanoylglycerol + H2O = dodecanoate + glycerol + H(+). It carries out the reaction 1-tetradecanoylglycerol + H2O = tetradecanoate + glycerol + H(+). It catalyses the reaction 2-hexadecanoylglycerol + H2O = glycerol + hexadecanoate + H(+). The enzyme catalyses 1-(9Z-octadecenoyl)-glycerol + H2O = glycerol + (9Z)-octadecenoate + H(+). The catalysed reaction is 2-(9Z-octadecenoyl)-glycerol + H2O = glycerol + (9Z)-octadecenoate + H(+). It carries out the reaction 2-(9Z,12Z-octadecadienoyl)-glycerol + H2O = (9Z,12Z)-octadecadienoate + glycerol + H(+). It catalyses the reaction 1-(5Z,8Z,11Z,14Z-eicosatetraenoyl)-glycerol + H2O = glycerol + (5Z,8Z,11Z,14Z)-eicosatetraenoate + H(+). The enzyme catalyses 1-(9Z,12Z-octadecadienoyl)-glycerol + H2O = (9Z,12Z)-octadecadienoate + glycerol + H(+). The catalysed reaction is 1-hexadecanoylglycerol + H2O = glycerol + hexadecanoate + H(+). It carries out the reaction 1-octadecanoylglycerol + H2O = octadecanoate + glycerol + H(+). It catalyses the reaction prostaglandin E2 1-glyceryl ester + H2O = prostaglandin E2 + glycerol + H(+). The enzyme catalyses prostaglandin D2-1-glycerol ester + H2O = prostaglandin D2 + glycerol + H(+). The catalysed reaction is 2-glyceryl-15-deoxy-Delta(12,14)-prostaglandin J2 + H2O = 15-deoxy-Delta(12,14)-prostaglandin J2 + glycerol + H(+). It carries out the reaction prostaglandin F2alpha 1-glyceryl ester + H2O = prostaglandin F2alpha + glycerol + H(+). Its pathway is glycerolipid metabolism; triacylglycerol degradation. In terms of biological role, converts monoacylglycerides to free fatty acids and glycerol. Hydrolyzes the endocannabinoid 2-arachidonoylglycerol, and thereby contributes to the regulation of endocannabinoid signaling, nociperception and perception of pain. Regulates the levels of fatty acids that serve as signaling molecules and promote cancer cell migration, invasion and tumor growth. This is Monoglyceride lipase from Homo sapiens (Human).